Consider the following 362-residue polypeptide: Phosphoserine aminotransferase (362 aa).

R42 is an L-glutamate binding site. Residues 76-77 (AR), W102, T153, D174, and Q197 each bind pyridoxal 5'-phosphate. K198 is subject to N6-(pyridoxal phosphate)lysine. Residue 239-240 (NT) participates in pyridoxal 5'-phosphate binding.

It belongs to the class-V pyridoxal-phosphate-dependent aminotransferase family. SerC subfamily. As to quaternary structure, homodimer. Pyridoxal 5'-phosphate is required as a cofactor.

Its subcellular location is the cytoplasm. The enzyme catalyses O-phospho-L-serine + 2-oxoglutarate = 3-phosphooxypyruvate + L-glutamate. It catalyses the reaction 4-(phosphooxy)-L-threonine + 2-oxoglutarate = (R)-3-hydroxy-2-oxo-4-phosphooxybutanoate + L-glutamate. It functions in the pathway amino-acid biosynthesis; L-serine biosynthesis; L-serine from 3-phospho-D-glycerate: step 2/3. It participates in cofactor biosynthesis; pyridoxine 5'-phosphate biosynthesis; pyridoxine 5'-phosphate from D-erythrose 4-phosphate: step 3/5. In terms of biological role, catalyzes the reversible conversion of 3-phosphohydroxypyruvate to phosphoserine and of 3-hydroxy-2-oxo-4-phosphonooxybutanoate to phosphohydroxythreonine. The sequence is that of Phosphoserine aminotransferase from Proteus mirabilis (strain HI4320).